The sequence spans 84 residues: Exendin-2-long (84 aa).

The first 23 residues, 1-23 (MKSILWLCVFGLLIATLFPVSWQ), serve as a signal peptide directing secretion. Residues 24–44 (MAIKSRLSSEDSETDQRLFES) constitute a propeptide that is removed on maturation.

The protein belongs to the glucagon family. Post-translationally, an amidated Pro-81 is described. Such an amidation is however not compatible with the sequence displayed. Indeed cDNAs do not encode a Gly that could serve as substrate for peptide alpha-amidation. In terms of tissue distribution, expressed by the venom gland. Not expressed in the pancreas, liver, stomach, small intestine, lung, heart, kidney, spleen, ovary, and brain.

Its subcellular location is the secreted. Its function is as follows. Has vasoactive intestinal peptide(VIP)/secretin-like biological activity. Interacts with rat and human VIP receptors 1 (VIPR1) and 2 (VIPR2), with the highest affinity for the human VIPR2. Induces hypotension that is mediated by relaxation of cardiac smooth muscle. This vasodilation may not be transduced by VIP or PACAP receptors. This is Exendin-2-long from Heloderma suspectum (Gila monster).